We begin with the raw amino-acid sequence, 340 residues long: 4-hydroxy-2-oxovalerate aldolase (340 aa).

The 253-residue stretch at 8 to 260 folds into the Pyruvate carboxyltransferase domain; sequence VILHDMSLRD…SHGINLYDIM (253 aa). A substrate-binding site is contributed by 16–17; the sequence is RD. Asp-17 provides a ligand contact to Mn(2+). The Proton acceptor role is filled by His-20. Ser-170 and His-199 together coordinate substrate. The Mn(2+) site is built by His-199 and His-201. Residue Tyr-290 coordinates substrate.

Belongs to the 4-hydroxy-2-oxovalerate aldolase family.

The enzyme catalyses (S)-4-hydroxy-2-oxopentanoate = acetaldehyde + pyruvate. The chain is 4-hydroxy-2-oxovalerate aldolase from Shewanella pealeana (strain ATCC 700345 / ANG-SQ1).